The chain runs to 125 residues: Phosphoribosyl-AMP cyclohydrolase (125 aa).

Asp-74 is a Mg(2+) binding site. A Zn(2+)-binding site is contributed by Cys-75. 2 residues coordinate Mg(2+): Asp-76 and Asp-78. Positions 92 and 99 each coordinate Zn(2+).

It belongs to the PRA-CH family. Homodimer. Requires Mg(2+) as cofactor. Zn(2+) is required as a cofactor.

The protein resides in the cytoplasm. The enzyme catalyses 1-(5-phospho-beta-D-ribosyl)-5'-AMP + H2O = 1-(5-phospho-beta-D-ribosyl)-5-[(5-phospho-beta-D-ribosylamino)methylideneamino]imidazole-4-carboxamide. The protein operates within amino-acid biosynthesis; L-histidine biosynthesis; L-histidine from 5-phospho-alpha-D-ribose 1-diphosphate: step 3/9. Functionally, catalyzes the hydrolysis of the adenine ring of phosphoribosyl-AMP. This Geobacter sulfurreducens (strain ATCC 51573 / DSM 12127 / PCA) protein is Phosphoribosyl-AMP cyclohydrolase.